The chain runs to 234 residues: LexA repressor (234 aa).

Positions 26 to 46 form a DNA-binding region, H-T-H motif; the sequence is FDEMKTALELTSKSGIHRLIT. Active-site for autocatalytic cleavage activity residues include serine 155 and lysine 193.

The protein belongs to the peptidase S24 family. Homodimer.

It carries out the reaction Hydrolysis of Ala-|-Gly bond in repressor LexA.. Its function is as follows. Represses a number of genes involved in the response to DNA damage (SOS response), including recA and lexA. In the presence of single-stranded DNA, RecA interacts with LexA causing an autocatalytic cleavage which disrupts the DNA-binding part of LexA, leading to derepression of the SOS regulon and eventually DNA repair. The chain is LexA repressor from Bartonella henselae (strain ATCC 49882 / DSM 28221 / CCUG 30454 / Houston 1) (Rochalimaea henselae).